We begin with the raw amino-acid sequence, 309 residues long: Lipoyl synthase (309 aa).

Cys-37, Cys-42, Cys-48, Cys-67, Cys-71, Cys-74, and Ser-281 together coordinate [4Fe-4S] cluster. Residues 53–270 (DGPGTATFML…RVAETEFGFL (218 aa)) form the Radical SAM core domain.

It belongs to the radical SAM superfamily. Lipoyl synthase family. It depends on [4Fe-4S] cluster as a cofactor.

It localises to the cytoplasm. It catalyses the reaction [[Fe-S] cluster scaffold protein carrying a second [4Fe-4S](2+) cluster] + N(6)-octanoyl-L-lysyl-[protein] + 2 oxidized [2Fe-2S]-[ferredoxin] + 2 S-adenosyl-L-methionine + 4 H(+) = [[Fe-S] cluster scaffold protein] + N(6)-[(R)-dihydrolipoyl]-L-lysyl-[protein] + 4 Fe(3+) + 2 hydrogen sulfide + 2 5'-deoxyadenosine + 2 L-methionine + 2 reduced [2Fe-2S]-[ferredoxin]. Its pathway is protein modification; protein lipoylation via endogenous pathway; protein N(6)-(lipoyl)lysine from octanoyl-[acyl-carrier-protein]: step 2/2. Catalyzes the radical-mediated insertion of two sulfur atoms into the C-6 and C-8 positions of the octanoyl moiety bound to the lipoyl domains of lipoate-dependent enzymes, thereby converting the octanoylated domains into lipoylated derivatives. The protein is Lipoyl synthase of Natronomonas pharaonis (strain ATCC 35678 / DSM 2160 / CIP 103997 / JCM 8858 / NBRC 14720 / NCIMB 2260 / Gabara) (Halobacterium pharaonis).